Consider the following 836-residue polypeptide: Conserved oligomeric Golgi complex subunit 7 (836 aa).

Coiled-coil stretches lie at residues 29 to 49 (QDSL…ASEE) and 107 to 127 (LARV…LQDA). The interval 246-265 (KLANERSESQRLSSGDEFQS) is disordered.

The protein belongs to the COG7 family. Component of the conserved oligomeric Golgi complex which is composed of eight different subunits and is required for normal Golgi morphology and localization. Interacts with COG5 and COG6.

The protein resides in the golgi apparatus membrane. Required for normal Golgi function. Necessary for embryo development and pigmentation, especially for the expansion of cells and organs, and for the formation of the organized shoot apical meristem (SAM). Probably involved in the generation of the extra-cellular matrix. The chain is Conserved oligomeric Golgi complex subunit 7 from Arabidopsis thaliana (Mouse-ear cress).